The sequence spans 308 residues: Ribosomal RNA large subunit methyltransferase F (308 aa).

This sequence belongs to the methyltransferase superfamily. METTL16/RlmF family.

The protein resides in the cytoplasm. It catalyses the reaction adenosine(1618) in 23S rRNA + S-adenosyl-L-methionine = N(6)-methyladenosine(1618) in 23S rRNA + S-adenosyl-L-homocysteine + H(+). Functionally, specifically methylates the adenine in position 1618 of 23S rRNA. This chain is Ribosomal RNA large subunit methyltransferase F, found in Escherichia coli (strain SMS-3-5 / SECEC).